The sequence spans 312 residues: Ribosomal protein L11 methyltransferase (312 aa).

Residues threonine 159, glycine 180, aspartate 201, and asparagine 244 each contribute to the S-adenosyl-L-methionine site.

Belongs to the methyltransferase superfamily. PrmA family.

The protein localises to the cytoplasm. It carries out the reaction L-lysyl-[protein] + 3 S-adenosyl-L-methionine = N(6),N(6),N(6)-trimethyl-L-lysyl-[protein] + 3 S-adenosyl-L-homocysteine + 3 H(+). Functionally, methylates ribosomal protein L11. The polypeptide is Ribosomal protein L11 methyltransferase (Desulfitobacterium hafniense (strain DSM 10664 / DCB-2)).